Reading from the N-terminus, the 133-residue chain is Fluoride-specific ion channel FluC (133 aa).

4 consecutive transmembrane segments (helical) span residues valine 5–leucine 25, valine 43–isoleucine 63, valine 76–leucine 96, and isoleucine 108–leucine 128. Na(+) contacts are provided by glycine 83 and threonine 86.

Belongs to the fluoride channel Fluc/FEX (TC 1.A.43) family.

The protein localises to the cell inner membrane. The enzyme catalyses fluoride(in) = fluoride(out). Its activity is regulated as follows. Na(+) is not transported, but it plays an essential structural role and its presence is essential for fluoride channel function. In terms of biological role, fluoride-specific ion channel. Important for reducing fluoride concentration in the cell, thus reducing its toxicity. In Saccharophagus degradans (strain 2-40 / ATCC 43961 / DSM 17024), this protein is Fluoride-specific ion channel FluC.